Here is a 620-residue protein sequence, read N- to C-terminus: MTMITIDYIKDIIKRSDKLSEEIDPDQTPYKSKYEAIELLVKELKKEINENEKELNQQQQQDILDYLVVIDSKLGELFIATEEITLGLNICRDCLKSLESIKNKFPLETISTFQSIAIIDINKNHFENGKQLLIKSENLINQTIEKQQEQEQEQEQQFKDKLESLQLQNYFYFAQLYGLLKDSELSSKYCELTLRKQLKRNNFDRLEWCKNSLMLAEYYLSELNFDYAKQCFLVSNYICKGIENEDDREETQANIYLVMAKFYLEFLHFFRDIENLNHCHRVNNNNKNNNNENDIDFVQGGLSSISLSDKQKEKEKEDKLFNENQIKKEKMLDLISFNKRSLNIDKPLFTELGSELLDKIYNHSTFTSPIDLIVVKDQPSARDIFLKSQHFFNKSKKYYKLDGFVSQHIKILFDQINLFEYLNMFESNAGRKIGIHKKKIELIQPLLKELNPTYFLSSIRSIYFKIAEIYSEISKIYQCVCTNLREIQTYNECLFKSMEYYNLFLNSYNDGEVPNSPKITEEEKMKSIIEDFEVYINAKLELAVCHKNVKGVNKLVLEHLEKSLNLFRSIITLLDSVPKDISSRHTQEYHLCSQMSSLLPQKIQFLSSNKTPNPGQWYGK.

Coiled coils occupy residues 30–64 (YKSK…QDIL) and 133–169 (LIKS…QLQN).

This sequence belongs to the KIF-binding protein family.

The protein resides in the cytoplasm. It is found in the cytoskeleton. Activator of KIF1B plus-end-directed microtubule motor activity. Required for organization of axonal microtubules, and axonal outgrowth and maintenance during peripheral and central nervous system development. In Dictyostelium discoideum (Social amoeba), this protein is KIF-binding protein (kifbp).